A 392-amino-acid polypeptide reads, in one-letter code: L-rhamnonate dehydratase (392 aa).

The substrate site is built by histidine 22 and arginine 48. Mg(2+) is bound by residues aspartate 214, glutamate 240, and glutamate 268. Histidine 318 functions as the Proton acceptor in the catalytic mechanism. Substrate is bound at residue glutamate 338.

It belongs to the mandelate racemase/muconate lactonizing enzyme family. RhamD subfamily. As to quaternary structure, homooctamer; tetramer of dimers. Requires Mg(2+) as cofactor.

The enzyme catalyses L-rhamnonate = 2-dehydro-3-deoxy-L-rhamnonate + H2O. Functionally, catalyzes the dehydration of L-rhamnonate to 2-keto-3-deoxy-L-rhamnonate (KDR). The sequence is that of L-rhamnonate dehydratase from Paraburkholderia xenovorans (strain LB400).